Consider the following 348-residue polypeptide: Phosphate acyltransferase (348 aa).

The protein belongs to the PlsX family. In terms of assembly, homodimer. Probably interacts with PlsY.

The protein resides in the cytoplasm. The enzyme catalyses a fatty acyl-[ACP] + phosphate = an acyl phosphate + holo-[ACP]. It participates in lipid metabolism; phospholipid metabolism. Its function is as follows. Catalyzes the reversible formation of acyl-phosphate (acyl-PO(4)) from acyl-[acyl-carrier-protein] (acyl-ACP). This enzyme utilizes acyl-ACP as fatty acyl donor, but not acyl-CoA. The polypeptide is Phosphate acyltransferase (Rhizobium etli (strain ATCC 51251 / DSM 11541 / JCM 21823 / NBRC 15573 / CFN 42)).